We begin with the raw amino-acid sequence, 81 residues long: Delta-conotoxin PVIA (81 aa).

The first 22 residues, 1 to 22 (MKLTCVMIVAVLFLTAWTFVTA), serve as a signal peptide directing secretion. A propeptide spanning residues 23–49 (DDSKNGLENHFWKARDEMKNREASKLD) is cleaved from the precursor. 3 disulfide bridges follow: cysteine 54-cysteine 69, cysteine 61-cysteine 73, and cysteine 68-cysteine 78. Proline 57 and proline 65 each carry 4-hydroxyproline. Glycine 80 carries the glycine amide; in form delta-conotoxin PVIA modification.

In terms of processing, the difference between delta-conotoxin PVIA and [deamido]-delta-conotoxin PVIA lies in the state of amidation of Gly-80. As to expression, expressed by the venom duct.

It localises to the secreted. In terms of biological role, delta-conotoxins bind to site 6 of voltage-gated sodium channels (Nav) and inhibit the inactivation process. This toxin shows weak effects on rNav1.2/SCN2A (EC(50)=2.9 uM), rNav1.4/SCN4A (EC(50)=5.2 uM), hNav1.7/SCN9A (EC(50)=1.9 uM) and rNav1.7/SCN9A (EC(50)=6.4 uM). In vivo, this toxin shows different effects. In mice, injection of this toxin causes hyperactivity, rapid running, limb extension, and death. In fish, the peptide elicites spurts of rapid swimming, with twisted motions, quivering fins and the lockjaw extended mouth syndrome. Rigid paralysis and death are observed at higher doses. In mollusks, this peptide is inactive. Injection of this peptide together with the kappa-conotoxin PVIIA causes the sudden tetanus of prey (STOP) syndrome, which is a single, lethal 'fin-pop' in envenomed fish. The polypeptide is Delta-conotoxin PVIA (Conus purpurascens (Purple cone)).